Reading from the N-terminus, the 335-residue chain is Gibberellin 2-beta-dioxygenase 3 (335 aa).

In terms of domain architecture, Fe2OG dioxygenase spans 175 to 278 (ESDSCLRMNH…RISMIYFAGP (104 aa)). Fe cation contacts are provided by histidine 202, aspartate 204, and histidine 259. Arginine 269 is an active-site residue.

Belongs to the iron/ascorbate-dependent oxidoreductase family. GA2OX subfamily. It depends on Fe(2+) as a cofactor. As to expression, not expressed in the apex.

It carries out the reaction gibberellin A1 + 2-oxoglutarate + O2 = gibberellin A8 + succinate + CO2. Its pathway is plant hormone biosynthesis; gibberellin biosynthesis. Functionally, catalyzes the 2-beta-hydroxylation of several biologically active gibberellins, leading to the homeostatic regulation of their endogenous level. Catabolism of gibberellins (GAs) plays a central role in plant development. Converts GA9/GA20 to GA51/GA29 and GA4/GA1 to GA34/GA8. This Arabidopsis thaliana (Mouse-ear cress) protein is Gibberellin 2-beta-dioxygenase 3 (GA2OX3).